Reading from the N-terminus, the 530-residue chain is uncharacterized protein (530 aa).

Polar residues-rich tracts occupy residues 60-74 and 92-103; these read LNES…SSTP and GQGTSRPLPTLS. Disordered stretches follow at residues 60–103 and 121–155; these read LNES…PTLS and ASST…GLGN. Basic and acidic residues predominate over residues 131 to 142; it reads PDPRDAPREGSF.

This is an uncharacterized protein from Mus musculus (Mouse).